The chain runs to 205 residues: Holliday junction branch migration complex subunit RuvA (205 aa).

The domain I stretch occupies residues 1-62 (MFEYVTGYVE…EDIMALYGFK (62 aa)). Residues 63–141 (TREERLLFTK…DVVPDAFVDL (79 aa)) are domain II. A flexible linker region spans residues 142-152 (FSDTERFDEKK). Residues 153–205 (GSSAELDEALEALRALGYAEREVSRVVPELLKESLTTDQYIKKALSLLLNGKR) form a domain III region.

It belongs to the RuvA family. In terms of assembly, homotetramer. Forms an RuvA(8)-RuvB(12)-Holliday junction (HJ) complex. HJ DNA is sandwiched between 2 RuvA tetramers; dsDNA enters through RuvA and exits via RuvB. An RuvB hexamer assembles on each DNA strand where it exits the tetramer. Each RuvB hexamer is contacted by two RuvA subunits (via domain III) on 2 adjacent RuvB subunits; this complex drives branch migration. In the full resolvosome a probable DNA-RuvA(4)-RuvB(12)-RuvC(2) complex forms which resolves the HJ.

It localises to the cytoplasm. Functionally, the RuvA-RuvB-RuvC complex processes Holliday junction (HJ) DNA during genetic recombination and DNA repair, while the RuvA-RuvB complex plays an important role in the rescue of blocked DNA replication forks via replication fork reversal (RFR). RuvA specifically binds to HJ cruciform DNA, conferring on it an open structure. The RuvB hexamer acts as an ATP-dependent pump, pulling dsDNA into and through the RuvAB complex. HJ branch migration allows RuvC to scan DNA until it finds its consensus sequence, where it cleaves and resolves the cruciform DNA. The polypeptide is Holliday junction branch migration complex subunit RuvA (Bacillus cereus (strain ATCC 14579 / DSM 31 / CCUG 7414 / JCM 2152 / NBRC 15305 / NCIMB 9373 / NCTC 2599 / NRRL B-3711)).